Reading from the N-terminus, the 389-residue chain is Phosphopentomutase (389 aa).

The Mn(2+) site is built by Asp9, Asp282, His287, Asp323, His324, and His335.

It belongs to the phosphopentomutase family. Mn(2+) is required as a cofactor.

The protein localises to the cytoplasm. It carries out the reaction 2-deoxy-alpha-D-ribose 1-phosphate = 2-deoxy-D-ribose 5-phosphate. The enzyme catalyses alpha-D-ribose 1-phosphate = D-ribose 5-phosphate. It functions in the pathway carbohydrate degradation; 2-deoxy-D-ribose 1-phosphate degradation; D-glyceraldehyde 3-phosphate and acetaldehyde from 2-deoxy-alpha-D-ribose 1-phosphate: step 1/2. Its function is as follows. Isomerase that catalyzes the conversion of deoxy-ribose 1-phosphate (dRib-1-P) and ribose 1-phosphate (Rib-1-P) to deoxy-ribose 5-phosphate (dRib-5-P) and ribose 5-phosphate (Rib-5-P), respectively. This chain is Phosphopentomutase, found in Kosmotoga olearia (strain ATCC BAA-1733 / DSM 21960 / TBF 19.5.1).